A 466-amino-acid chain; its full sequence is Putative ABC transporter ATP-binding protein MG065 (466 aa).

Positions Ile233–Ile463 constitute an ABC transporter domain. Gly269–Thr276 provides a ligand contact to ATP.

Belongs to the ABC transporter superfamily.

The polypeptide is Putative ABC transporter ATP-binding protein MG065 (Mycoplasma genitalium (strain ATCC 33530 / DSM 19775 / NCTC 10195 / G37) (Mycoplasmoides genitalium)).